The primary structure comprises 337 residues: Probable RuBisCO transcriptional regulator (337 aa).

Residues 6 to 63 (FTLDQLRILKAIAVEGSFKRAADSLYVSQPAVSLQVQNLERQLDVPLFDRGGRRAQLT) form the HTH lysR-type domain. Residues 23-42 (FKRAADSLYVSQPAVSLQVQ) constitute a DNA-binding region (H-T-H motif).

Belongs to the LysR transcriptional regulatory family.

Functionally, trans-acting transcriptional regulator of RuBisCO genes (rbcL and rbcS) expression. The sequence is that of Probable RuBisCO transcriptional regulator (rbcR) from Nostoc sp. (strain PCC 7120 / SAG 25.82 / UTEX 2576).